The following is a 363-amino-acid chain: Peptide chain release factor 1 (363 aa).

At Q237 the chain carries N5-methylglutamine. Residues 284-296 show a composition bias toward basic and acidic residues; the sequence is EDEKRRSAEESTR. A disordered region spans residues 284 to 305; it reads EDEKRRSAEESTRRSLVASGDR.

It belongs to the prokaryotic/mitochondrial release factor family. In terms of processing, methylated by PrmC. Methylation increases the termination efficiency of RF1.

It is found in the cytoplasm. Its function is as follows. Peptide chain release factor 1 directs the termination of translation in response to the peptide chain termination codons UAG and UAA. The protein is Peptide chain release factor 1 of Shewanella baltica (strain OS185).